The chain runs to 676 residues: Portal protein (676 aa).

Positions 383 to 404 (PGFGKGGNSRGSAGQDQGGRAP) are disordered. The putative leucine zipper motif stretch occupies residues 422 to 443 (LEGYINNLFGTIERLRETNAGL). The disordered stretch occupies residues 627–676 (PPPSPVGADFRPGASPRGRSRSRSPGRTARGAPDQGGGIGHRDGRRDGRR). Residues 666–676 (GHRDGRRDGRR) show a composition bias toward basic and acidic residues.

This sequence belongs to the herpesviridae portal protein family. Homododecamerizes. Interacts with terminase subunits TRM1 and TRM3.

The protein localises to the virion. Its subcellular location is the host nucleus. Forms a portal in the viral capsid through which viral DNA is translocated during DNA packaging. Assembles as a dodecamer at a single fivefold axe of the T=16 icosahedric capsid. Binds to the molecular motor that translocates the viral DNA, termed terminase. The chain is Portal protein (UL6) from Human herpesvirus 1 (strain 17) (HHV-1).